The primary structure comprises 179 residues: Ribosome maturation factor RimM (179 aa).

The PRC barrel domain maps to 100 to 176 (HGEYHLTELI…FILLTPPSGL (77 aa)).

It belongs to the RimM family. As to quaternary structure, binds ribosomal protein uS19.

The protein resides in the cytoplasm. In terms of biological role, an accessory protein needed during the final step in the assembly of 30S ribosomal subunit, possibly for assembly of the head region. Essential for efficient processing of 16S rRNA. May be needed both before and after RbfA during the maturation of 16S rRNA. It has affinity for free ribosomal 30S subunits but not for 70S ribosomes. This Prochlorococcus marinus subsp. pastoris (strain CCMP1986 / NIES-2087 / MED4) protein is Ribosome maturation factor RimM.